A 356-amino-acid polypeptide reads, in one-letter code: Phosphoserine aminotransferase (356 aa).

Arg41 contacts L-glutamate. Pyridoxal 5'-phosphate is bound by residues 76–77 (AS), Trp102, Thr150, Asp169, and Gln192. Lys193 bears the N6-(pyridoxal phosphate)lysine mark. Position 234 to 235 (234 to 235 (NT)) interacts with pyridoxal 5'-phosphate.

The protein belongs to the class-V pyridoxal-phosphate-dependent aminotransferase family. SerC subfamily. In terms of assembly, homodimer. It depends on pyridoxal 5'-phosphate as a cofactor.

The protein localises to the cytoplasm. The enzyme catalyses O-phospho-L-serine + 2-oxoglutarate = 3-phosphooxypyruvate + L-glutamate. The catalysed reaction is 4-(phosphooxy)-L-threonine + 2-oxoglutarate = (R)-3-hydroxy-2-oxo-4-phosphooxybutanoate + L-glutamate. Its pathway is amino-acid biosynthesis; L-serine biosynthesis; L-serine from 3-phospho-D-glycerate: step 2/3. The protein operates within cofactor biosynthesis; pyridoxine 5'-phosphate biosynthesis; pyridoxine 5'-phosphate from D-erythrose 4-phosphate: step 3/5. Its function is as follows. Catalyzes the reversible conversion of 3-phosphohydroxypyruvate to phosphoserine and of 3-hydroxy-2-oxo-4-phosphonooxybutanoate to phosphohydroxythreonine. This chain is Phosphoserine aminotransferase, found in Flavobacterium johnsoniae (strain ATCC 17061 / DSM 2064 / JCM 8514 / BCRC 14874 / CCUG 350202 / NBRC 14942 / NCIMB 11054 / UW101) (Cytophaga johnsonae).